The following is a 92-amino-acid chain: WAP four-disulfide core domain protein 12 (92 aa).

The N-terminal stretch at 1–23 is a signal peptide; it reads MGSSRFLVLMVSLALVTLVAAEG. The region spanning 27–74 is the WAP domain; that stretch reads NIEKPEVCPADNVRCIKSDPPQCHTDQDCQGIRKCCYLHCGFKCVIPV. Cystine bridges form between cysteine 34–cysteine 62, cysteine 41–cysteine 66, cysteine 49–cysteine 61, and cysteine 55–cysteine 70.

The protein localises to the secreted. Its function is as follows. Antibacterial protein. Putative acid-stable proteinase inhibitor. In Aotus nancymaae (Ma's night monkey), this protein is WAP four-disulfide core domain protein 12 (WFDC12).